A 38-amino-acid chain; its full sequence is Humanin-like protein (38 aa).

In the testis, expressed in Leydig cells at 10, 20 and 60 days of age (at protein level). Also expressed in pachytene spermatocytes at day 20 and in vessels, peritubular cells and spermatids at day 60. Not detected in Sertoli cells (at protein level). In the adult ovary, expressed in stromal cells, granulosa cells, theca cells and oocytes at diestrus and proestrus (at protein level). Expressed in the anterior pituitary where it is detected in lactotropes and somatotropes with lower levels in females than males (at protein level). In the hippocampus, expressed in astrocytes but not in neurons or oligodendrocytes (at protein level). Expressed in muscle, liver and hypothalamus but not in epididymal fat (at protein level). Widely expressed with highest levels in cardiac and skeletal muscle and lowest levels in lung, testis and uterus. In the CNS, levels are relatively high in the cerebellum and cortex and low in the hippocampus. In the hippocampus, lower levels are detected in ovariectomized animals than in controls.

The protein localises to the mitochondrion. It localises to the secreted. It is found in the cytoplasm. Functionally, plays a role as a neuroprotective factor. Protects against neuronal cell death induced by amyloid-beta peptides. Also protects against excitotoxic cell death. Prevents amyloid-beta peptide-induced spatial learning and memory impairments, protects against amyloid-beta peptide-induced suppression of hippocampal long-term potentiation, and inhibits amyloid-beta peptide-induced activation of STAT3 and inhibition of CASP3. Prevents glutamate-induced dendritic atrophy in hippocampal neurons and also prevents glutamate-induced decrease in SYP puncta number and total puncta area. Protects anterior pituitary cells from TNF-induced apoptosis. Plays a role in ovarian follicle development by acting as a cryoprotective factor for granulosa cells in the antral follicle. Increases androgen production in Leydig cells and promotes Leydig cell survival by preventing apoptosis. The polypeptide is Humanin-like protein (Rattus norvegicus (Rat)).